The chain runs to 288 residues: uncharacterized protein (288 aa).

Low complexity predominate over residues 126–136 (VAAPASTPVAP). Disordered stretches follow at residues 126 to 227 (VAAP…VTSV) and 258 to 288 (KEKDQTAEESQEQPSLSLEETLVHDRISSEE). Over residues 143–152 (RKEFKNEKWK) the composition is skewed to basic and acidic residues. Residues 153 to 162 (DKKKQGRRRN) show a composition bias toward basic residues. Over residues 180–194 (VAEECLQESSSEEGD) the composition is skewed to acidic residues. The span at 278-288 (TLVHDRISSEE) shows a compositional bias: basic and acidic residues.

This sequence belongs to the chlamydial CPn_0623/CT_504/TC_0791 family.

This is an uncharacterized protein from Chlamydia trachomatis serovar D (strain ATCC VR-885 / DSM 19411 / UW-3/Cx).